The primary structure comprises 345 residues: Cell division control protein 2 homolog 2 (345 aa).

The segment at 1 to 44 (MQVQVQEGQTACDGSLRPLPSAGPASFVPRSLRPAPLRGTSTPD) is disordered. One can recognise a Protein kinase domain in the interval 46-328 (YSRIEKVGEG…AYEALQHSYF (283 aa)). Residues 52–60 (VGEGSYGIV) and K75 contribute to the ATP site. The residue at position 56 (S56) is a Phosphoserine. Y57 is subject to Phosphotyrosine. D168 serves as the catalytic Proton acceptor.

Belongs to the protein kinase superfamily. CMGC Ser/Thr protein kinase family. CDC2/CDKX subfamily. Forms a stable but non-covalent complex with a regulatory subunit and with a cyclin.

The catalysed reaction is L-seryl-[protein] + ATP = O-phospho-L-seryl-[protein] + ADP + H(+). The enzyme catalyses L-threonyl-[protein] + ATP = O-phospho-L-threonyl-[protein] + ADP + H(+). With respect to regulation, phosphorylation at Ser-56 or Tyr-57 inactivates the enzyme. In terms of biological role, probably involved in the control of the cell cycle. In Trypanosoma brucei brucei, this protein is Cell division control protein 2 homolog 2 (CRK2).